The primary structure comprises 1154 residues: Caspase recruitment domain-containing protein 11 (1154 aa).

Positions glutamate 18–glutamate 110 constitute a CARD domain. The tract at residues proline 111–threonine 128 is linker. A coiled-coil region spans residues phenylalanine 130–leucine 449. Phosphoserine is present on residues serine 448 and serine 466. Positions proline 450–valine 666 are inhibitory domain (ID). Residues glutamine 460–glutamate 626 are disordered. Over residues glutamate 473–proline 484 the composition is skewed to acidic residues. A Phosphoserine modification is found at serine 512. The span at arginine 518–glutamate 529 shows a compositional bias: basic and acidic residues. Over residues alanine 534–serine 562 the composition is skewed to polar residues. Serine 535 is modified (phosphoserine). The residue at position 559 (serine 559) is a Phosphoserine; by PKC/PRKCB and PKC/PRKCQ. Residues isoleucine 573–valine 587 show a composition bias toward basic and acidic residues. Serine 593 carries the phosphoserine modification. Over residues serine 614–serine 625 the composition is skewed to low complexity. Residues serine 644 and serine 652 each carry the phosphoserine; by PKC/PRKCB and PKC/PRKCQ modification. A PDZ domain is found at glutamine 667 to histidine 755. Phosphoserine is present on residues serine 886 and serine 925. The region spanning arginine 973–glycine 1140 is the Guanylate kinase-like domain.

Homodimer; disulfide-linked. Homomultimer; polymerizes following activation, forming a nucleating helical template that seeds BCL10-filament formation via a CARD-CARD interaction. Interacts (via CARD domain) with BCL10 (via CARD domain); interaction takes place following CARD11 activation and polymerization, leading to the formation of a filamentous CBM complex assembly. Component of a CBM complex (CARD11-BCL10-MALT1) complex involved in NF-kappa-B activation. Found in a membrane raft complex, at least composed of BCL10, CARD11, DPP4 and IKBKB. Interacts (via PDZ domain) with DPP4 (via cytoplasmic tail). In terms of processing, phosphorylation at Ser-559, Ser-644 and Ser-652 by PRKCB and PRKCQ leads to a shift from an inactive to an active form that activates the NF-kappa-B signaling. As to expression, detected in adult peripheral blood leukocytes, thymus, spleen and liver. Also found in promyelocytic leukemia HL-60 cells, chronic myelogenous leukemia K-562 cells, Burkitt's lymphoma Raji cells and colorectal adenocarcinoma SW480 cells. Not detected in HeLaS3, MOLT-4, A-549 and G431 cells.

Its subcellular location is the cytoplasm. The protein resides in the membrane raft. Maintained in an autoinhibited state via homodimerization in which the CARD domain forms an extensive interaction with the adjacent linker and coiled-coil regions. Activation downstream of T-cell receptor (TCR) by phosphorylation by PRKCB and PRKCQ triggers CARD11 homooligomerization and BCL10 recruitment, followed by activation of NF-kappa-B. Its function is as follows. Adapter protein that plays a key role in adaptive immune response by transducing the activation of NF-kappa-B downstream of T-cell receptor (TCR) and B-cell receptor (BCR) engagement. Transduces signals downstream TCR or BCR activation via the formation of a multiprotein complex together with BCL10 and MALT1 that induces NF-kappa-B and MAP kinase p38 (MAPK11, MAPK12, MAPK13 and/or MAPK14) pathways. Upon activation in response to TCR or BCR triggering, CARD11 homooligomerizes to form a nucleating helical template that recruits BCL10 via CARD-CARD interaction, thereby promoting polymerization of BCL10 and subsequent recruitment of MALT1: this leads to I-kappa-B kinase (IKK) phosphorylation and degradation, and release of NF-kappa-B proteins for nuclear translocation. Its binding to DPP4 induces T-cell proliferation and NF-kappa-B activation in a T-cell receptor/CD3-dependent manner. Promotes linear ubiquitination of BCL10 by promoting the targeting of BCL10 to RNF31/HOIP. Stimulates the phosphorylation of BCL10. Also activates the TORC1 signaling pathway. The polypeptide is Caspase recruitment domain-containing protein 11 (Homo sapiens (Human)).